The chain runs to 367 residues: MGHLIPQTGDEETELGLAAVRLANCAAFPMVFKAAIELGVIDTLYLAARDDVTGSSSFLTPSEIAIRLPTKPSNPEAPALLDRILRLLASYSMVKCQIIDGNRVYKAEPICRYFLKDNVDEELGTLASQLIVTLDTVFLNTWGELKNVVLEGGVAFGRANGGLKLFDYISKDERLSKLFNRTGFSVAVLKKILQVYSGFEGVNVLVDVGGGVGDTLGFVTSKYPNIKGINFDLTCALTQAPSYPNVEHVAGDMFVDVPKGDAILLKRILHDWTDEDCEKILKNCWKALPENGKVIVMEVVTPDEADNRDVISNIAFDMDLLMLTQLSGGKERSRAEYVAMAANSGFPRCNFVCSAYHLWVIELTKQA.

Residues G209, D232, D252, M253, and K266 each coordinate S-adenosyl-L-homocysteine. Residue H270 is the Proton acceptor of the active site.

It belongs to the class I-like SAM-binding methyltransferase superfamily. Cation-independent O-methyltransferase family.

It participates in secondary metabolite biosynthesis. Involved in indole glucosinolate biosynthesis. Catalyzes methoxylation reactions of the glucosinolate indole ring. Converts the hydroxy intermediates 4-hydroxy-indol-3-yl-methylglucosinolate (4OH-I3M) and 1-hydroxy-indol-3-yl-methylglucosinolate (1OH-I3M) to 4-methoxy-indol-3-yl-methylglucosinolate (4MO-I3M) and 1-methoxy-indol-3-yl-methylglucosinolate, respectively. This is Indole glucosinolate O-methyltransferase 5 from Arabidopsis thaliana (Mouse-ear cress).